Reading from the N-terminus, the 512-residue chain is Maturase K (512 aa).

Belongs to the intron maturase 2 family. MatK subfamily.

The protein localises to the plastid. The protein resides in the chloroplast. Its function is as follows. Usually encoded in the trnK tRNA gene intron. Probably assists in splicing its own and other chloroplast group II introns. The polypeptide is Maturase K (Lemna minuta (Least duckweed)).